The chain runs to 68 residues: Conotoxin Pu5.5 (68 aa).

The first 22 residues, 1–22, serve as a signal peptide directing secretion; it reads MRCVPVFIILLVLIASAPSVDA. The propeptide occupies 23 to 49; that stretch reads RPQTKDDALASFRDSIKRHLQTLLDAR.

The protein belongs to the conotoxin T superfamily. Contains 2 disulfide bonds that can be either 'C1-C3, C2-C4' or 'C1-C4, C2-C3', since these disulfide connectivities have been observed for conotoxins with cysteine framework V (for examples, see AC P0DQQ7 and AC P81755). In terms of tissue distribution, expressed by the venom duct.

It is found in the secreted. This chain is Conotoxin Pu5.5, found in Conus pulicarius (Flea-bitten cone).